Here is a 384-residue protein sequence, read N- to C-terminus: Probable tRNA sulfurtransferase (384 aa).

Residues 57–160 (EEVVDRVRNV…KKTYIYSKRI (104 aa)) form the THUMP domain. Residues 177-178 (ML), 202-203 (YF), Arg-259, Gly-281, and Gln-290 each bind ATP.

Belongs to the ThiI family.

The protein localises to the cytoplasm. It carries out the reaction [ThiI sulfur-carrier protein]-S-sulfanyl-L-cysteine + a uridine in tRNA + 2 reduced [2Fe-2S]-[ferredoxin] + ATP + H(+) = [ThiI sulfur-carrier protein]-L-cysteine + a 4-thiouridine in tRNA + 2 oxidized [2Fe-2S]-[ferredoxin] + AMP + diphosphate. It catalyses the reaction [ThiS sulfur-carrier protein]-C-terminal Gly-Gly-AMP + S-sulfanyl-L-cysteinyl-[cysteine desulfurase] + AH2 = [ThiS sulfur-carrier protein]-C-terminal-Gly-aminoethanethioate + L-cysteinyl-[cysteine desulfurase] + A + AMP + 2 H(+). Its pathway is cofactor biosynthesis; thiamine diphosphate biosynthesis. Functionally, catalyzes the ATP-dependent transfer of a sulfur to tRNA to produce 4-thiouridine in position 8 of tRNAs, which functions as a near-UV photosensor. Also catalyzes the transfer of sulfur to the sulfur carrier protein ThiS, forming ThiS-thiocarboxylate. This is a step in the synthesis of thiazole, in the thiamine biosynthesis pathway. The sulfur is donated as persulfide by IscS. This Clostridium acetobutylicum (strain ATCC 824 / DSM 792 / JCM 1419 / IAM 19013 / LMG 5710 / NBRC 13948 / NRRL B-527 / VKM B-1787 / 2291 / W) protein is Probable tRNA sulfurtransferase.